A 68-amino-acid chain; its full sequence is Small ribosomal subunit protein bS21 (68 aa).

Belongs to the bacterial ribosomal protein bS21 family.

This is Small ribosomal subunit protein bS21 from Jannaschia sp. (strain CCS1).